The primary structure comprises 345 residues: S-adenosylmethionine:tRNA ribosyltransferase-isomerase (345 aa).

The protein belongs to the QueA family. Monomer.

Its subcellular location is the cytoplasm. It carries out the reaction 7-aminomethyl-7-carbaguanosine(34) in tRNA + S-adenosyl-L-methionine = epoxyqueuosine(34) in tRNA + adenine + L-methionine + 2 H(+). Its pathway is tRNA modification; tRNA-queuosine biosynthesis. Transfers and isomerizes the ribose moiety from AdoMet to the 7-aminomethyl group of 7-deazaguanine (preQ1-tRNA) to give epoxyqueuosine (oQ-tRNA). This Shewanella oneidensis (strain ATCC 700550 / JCM 31522 / CIP 106686 / LMG 19005 / NCIMB 14063 / MR-1) protein is S-adenosylmethionine:tRNA ribosyltransferase-isomerase.